A 103-amino-acid polypeptide reads, in one-letter code: MLVTTTERISGQEYEIIGEVFGLTTRSKNMFKDLGAGLKSVVGGEIKGYTDMQREARDQAIERLKAEASKLGADAVVMMRFDSGTIGTDMQSVVAYGTAVKYI.

The protein belongs to the UPF0145 family.

The sequence is that of UPF0145 protein EF_0241 from Enterococcus faecalis (strain ATCC 700802 / V583).